We begin with the raw amino-acid sequence, 477 residues long: Ubiquinone biosynthesis monooxygenase COQ6, mitochondrial (477 aa).

The transit peptide at 1–25 (MLGVLRIQGALASAGQARLLSVRLL) directs the protein to the mitochondrion.

Belongs to the UbiH/COQ6 family. In terms of assembly, component of a multi-subunit COQ enzyme complex. It depends on FAD as a cofactor.

Its subcellular location is the mitochondrion inner membrane. It catalyses the reaction a 4-hydroxy-3-(all-trans-polyprenyl)benzoate + 2 reduced [2Fe-2S]-[ferredoxin] + O2 + 2 H(+) = a 3,4-dihydroxy-5-(all-trans-polyprenyl)benzoate + 2 oxidized [2Fe-2S]-[ferredoxin] + H2O. The enzyme catalyses a 2-methoxy-6-(all-trans-polyprenyl)phenol + 2 reduced [2Fe-2S]-[ferredoxin] + O2 + 2 H(+) = a 2-methoxy-6-(all-trans-polyprenyl)benzene-1,4-diol + 2 oxidized [2Fe-2S]-[ferredoxin] + H2O. Its pathway is cofactor biosynthesis; ubiquinone biosynthesis. Its function is as follows. FAD-dependent monooxygenase required for two non-consecutive steps during ubiquinone biosynthesis. Required for the C5-ring hydroxylation during ubiquinone biosynthesis by catalyzing the hydroxylation of 4-hydroxy-3-(all-trans-polyprenyl)benzoic acid to 3,4-dihydroxy-5-(all-trans-polyprenyl)benzoic acid. Also acts downstream of coq4, for the C1-hydroxylation during ubiquinone biosynthesis by catalyzing the hydroxylation of 2-methoxy-6-(all-trans-polyprenyl)phenol to 2-methoxy-6-(all-trans-polyprenyl)benzene-1,4-diol. The electrons required for the hydroxylation reaction are funneled indirectly to Coq6 from NADPH via a ferredoxin/ferredoxin reductase system. The polypeptide is Ubiquinone biosynthesis monooxygenase COQ6, mitochondrial (Drosophila melanogaster (Fruit fly)).